Reading from the N-terminus, the 265-residue chain is Undecaprenyl-diphosphatase (265 aa).

The next 8 membrane-spanning stretches (helical) occupy residues 19 to 39, 42 to 62, 80 to 100, 108 to 128, 143 to 163, 181 to 201, 220 to 240, and 243 to 263; these read FLPVSSTGHLILVGHLIGFTG, ADSFDVIIQLGAILAVVCLYW, IRGLWMLFLTSLPAGLIGLVA, LFNPWSVALALSVGAVMIFLV, MTPGLALGIGCFQCLSLWPGF, SLAAEYSFIGAVPLMFAATLY, IGFVVSFVSALIAVKAFIVLV, and ITLRPFAWYRLALAAAVFFFW.

The protein belongs to the UppP family.

It localises to the cell inner membrane. The catalysed reaction is di-trans,octa-cis-undecaprenyl diphosphate + H2O = di-trans,octa-cis-undecaprenyl phosphate + phosphate + H(+). Its function is as follows. Catalyzes the dephosphorylation of undecaprenyl diphosphate (UPP). Confers resistance to bacitracin. The polypeptide is Undecaprenyl-diphosphatase (Solidesulfovibrio magneticus (strain ATCC 700980 / DSM 13731 / RS-1) (Desulfovibrio magneticus)).